The primary structure comprises 368 residues: Aminomethyltransferase (368 aa).

This sequence belongs to the GcvT family. In terms of assembly, the glycine cleavage system is composed of four proteins: P, T, L and H.

It catalyses the reaction N(6)-[(R)-S(8)-aminomethyldihydrolipoyl]-L-lysyl-[protein] + (6S)-5,6,7,8-tetrahydrofolate = N(6)-[(R)-dihydrolipoyl]-L-lysyl-[protein] + (6R)-5,10-methylene-5,6,7,8-tetrahydrofolate + NH4(+). In terms of biological role, the glycine cleavage system catalyzes the degradation of glycine. This Thermoanaerobacter pseudethanolicus (strain ATCC 33223 / 39E) (Clostridium thermohydrosulfuricum) protein is Aminomethyltransferase.